The sequence spans 145 residues: Basic phospholipase A2 GL1-1 (145 aa).

The N-terminal stretch at Met1–Ala21 is a signal peptide. The propeptide occupies Ile22–Leu27. Disulfide bonds link Cys38–Cys98, Cys54–Cys144, Cys56–Cys72, Cys71–Cys125, Cys78–Cys118, Cys87–Cys111, and Cys105–Cys116. Tyr55, Gly57, and Gly59 together coordinate Ca(2+). Residue His75 is part of the active site. Asp76 serves as a coordination point for Ca(2+). Asp119 is a catalytic residue.

Belongs to the phospholipase A2 family. Group I subfamily. D49 sub-subfamily. The cofactor is Ca(2+). In terms of tissue distribution, expressed by the venom gland.

The protein resides in the secreted. It catalyses the reaction a 1,2-diacyl-sn-glycero-3-phosphocholine + H2O = a 1-acyl-sn-glycero-3-phosphocholine + a fatty acid + H(+). PLA2 catalyzes the calcium-dependent hydrolysis of the 2-acyl groups in 3-sn-phosphoglycerides. This is Basic phospholipase A2 GL1-1 from Laticauda semifasciata (Black-banded sea krait).